Reading from the N-terminus, the 1603-residue chain is DNA polymerase theta (1603 aa).

The Helicase ATP-binding domain occupies Glu-38 to Ala-208. Ala-51 to Ser-58 provides a ligand contact to ATP. The short motif at Asp-149–His-152 is the DEAH box element. Positions Thr-283–Glu-434 constitute a Helicase C-terminal domain.

Belongs to the DNA polymerase type-A family.

The protein resides in the nucleus. The enzyme catalyses DNA(n) + a 2'-deoxyribonucleoside 5'-triphosphate = DNA(n+1) + diphosphate. DNA polymerase that promotes microhomology-mediated end-joining (MMEJ), an alternative non-homologous end-joining (NHEJ) machinery triggered in response to double-strand breaks in DNA. MMEJ is an error-prone repair pathway that produces deletions of sequences from the strand being repaired and promotes genomic rearrangements, such as telomere fusions. Required to prevent extensive loss of sequences near G-quadruplex (G4) DNA sites, which are prone to cause genome alterations, by generating deletions. The protein is DNA polymerase theta of Caenorhabditis elegans.